A 501-amino-acid chain; its full sequence is Suppressor of hairless protein homolog (501 aa).

DNA-binding stretches follow at residues 58-68 (QKSYGNEKRFF), 166-171 (SKPSKK), and 193-198 (RLRSQT). The IPT/TIG domain maps to 356–446 (PVVESLQLNG…YSTSLTFTYT (91 aa)).

This sequence belongs to the Su(H) family. Interacts with activated Notch proteins. Forms a ternary complex with nrarp and the intracellular domain (NICD) of notch1. Interacts with rita1, leading to nuclear export, prevent the interaction between rbpj and NICD product and subsequent down-regulation of the Notch signaling pathway.

Its subcellular location is the nucleus. It localises to the cytoplasm. Its function is as follows. Transcriptional regulator that plays a central role in Notch signaling, a signaling pathway involved in cell-cell communication that regulates a broad spectrum of cell-fate determinations. Acts as a transcriptional repressor when it is not associated with Notch proteins. When associated with some NICD product of Notch proteins (Notch intracellular domain), it acts as a transcriptional activator that activates transcription of Notch target genes. Required for the transcriptional activation of ESR1, suggesting that it is required during primary neurogenesis in embryos. Binds to the oxygen responsive element of COX4I2 and activates its transcription under hypoxia conditions (4% oxygen). The chain is Suppressor of hairless protein homolog (rbpj) from Xenopus laevis (African clawed frog).